The chain runs to 375 residues: UDP-N-acetylglucosamine--N-acetylmuramyl-(pentapeptide) pyrophosphoryl-undecaprenol N-acetylglucosamine transferase (375 aa).

UDP-N-acetyl-alpha-D-glucosamine contacts are provided by residues 15 to 17 (TGG), Asn126, Arg169, Ser197, and Gln298.

It belongs to the glycosyltransferase 28 family. MurG subfamily.

It localises to the cell inner membrane. It catalyses the reaction di-trans,octa-cis-undecaprenyl diphospho-N-acetyl-alpha-D-muramoyl-L-alanyl-D-glutamyl-meso-2,6-diaminopimeloyl-D-alanyl-D-alanine + UDP-N-acetyl-alpha-D-glucosamine = di-trans,octa-cis-undecaprenyl diphospho-[N-acetyl-alpha-D-glucosaminyl-(1-&gt;4)]-N-acetyl-alpha-D-muramoyl-L-alanyl-D-glutamyl-meso-2,6-diaminopimeloyl-D-alanyl-D-alanine + UDP + H(+). Its pathway is cell wall biogenesis; peptidoglycan biosynthesis. In terms of biological role, cell wall formation. Catalyzes the transfer of a GlcNAc subunit on undecaprenyl-pyrophosphoryl-MurNAc-pentapeptide (lipid intermediate I) to form undecaprenyl-pyrophosphoryl-MurNAc-(pentapeptide)GlcNAc (lipid intermediate II). This Rhodopseudomonas palustris (strain BisB18) protein is UDP-N-acetylglucosamine--N-acetylmuramyl-(pentapeptide) pyrophosphoryl-undecaprenol N-acetylglucosamine transferase.